The chain runs to 279 residues: MSNQELVTLNVGGMKFSTLSATLRRFPDSRLARMLDNADREIRIINGHYFIDRDGSLFSYILDYVRTSQLSLPSGFSEFERLQREAEFYQLLSLADLLSQDTLYRPRVEILEVRFLLQETHAFFRLFCSSSTTIEMMADRILMFAEQPMGSQGWSFPFSAQKPLAPVPLQRPSHHDVVFQCGTDYTNGEHVGARYVSIKPDQRKLINGTNVLGLLLDILLKEGFCLISTRSVSAEEKVECYTFERKKRPEVLTIHENSRQENYETETVQVKQAKPNKKR.

The BTB domain maps to 5–74; that stretch reads ELVTLNVGGM…VRTSQLSLPS (70 aa). Residues 256-279 are disordered; that stretch reads ENSRQENYETETVQVKQAKPNKKR.

Its subcellular location is the endoplasmic reticulum. Inhibits potassium fluxes in cells, possibly by retaining potassium channels in the cytoplasm. The protein is Putative potassium channel regulatory protein (kcnrg) of Xenopus tropicalis (Western clawed frog).